An 888-amino-acid polypeptide reads, in one-letter code: APGPDGLTGTKGSMGEPGTDGEPGSPGPQGAKGETGLAGRRGLTGIPGKQGRQGERGEPGTAGSQGQQGQPGTQGPPGLPGKQGETGEPGESGEDGTPGPRGERGAQGERGATGMMGPSGDPGEAGIPGADGKAGERGVPGAPGPVGTPGLPGMPGQQGPMGPIGAKGSKGDVGPTGERGYDGKDGEPGRDGSPGPIGQPGIPGEKGEDGVPGSDGTPGSRGDSGPRGLPGNPGPPGRPGALGPSGPPGPQGPRGPRGEPGMKGPAGPPGRPGATGALGQLGKTGLKGEPGNQGRRGPPGLQGDPGKPGQSGPPGPPGPSGPSGRDGSDGQKGSSGEPGRPGKDGIPGQPGSNGKDGEPGTPGSDGRAGEIGPSGPIGPKGERGTPGATGPMGNSGPPGVQGSKGEKGPPGTNGRNGSPGISGSRGAQGPPGAPGSSGQNGVDGGTGENGTNGRPGLKGESGAPGDPGASGSAGPAGPPGPKGDTGPPGIQGEKGRRGADGIPGKTGEPGPQGDQGPKGQKGEVGPVGEKGDKGWTGTPGDPGPQGDRGEPGPPGRDGVDGPPGPRGAPGEMGAVGDPGLNGSMGEPGNKGPDGDLGESGAKGPDGIKGPPGPPGPPGPPGQPGMSEIASYLSVGNLEKGPGFRLYSSSGEEMPKQKIKAENVLKDLDEKDKEMDSLIAPDGSRKFPAKTCYDLFLDHGNFESGEYWIDPNGGTVKDAIKVYCDKKKNSSCVYPTNPKISDLVLKSGFESKEDKWLSKAFKKSEEVEYDAHYTQINFLRTLSNYANQNVTYACRNSKAWEDGQHSIKLMGSNDMEYHASSKISLRPTVIMNECANGGKLDKWGKTVLEIDTRERSRLPIVDVSAFDVGREGQDFKLEIGPACFHHIKY.

The disordered stretch occupies residues 1–627 (APGPDGLTGT…GPPGQPGMSE (627 aa)). The Collagen-like 1 domain occupies 3-60 (GPDGLTGTKGSMGEPGTDGEPGSPGPQGAKGETGLAGRRGLTGIPGKQGRQGERGEPG). 2 stretches are compositionally biased toward low complexity: residues 59–73 (PGTAGSQGQQGQPGT) and 148–164 (TPGLPGMPGQQGPMGPI). Residues 179–190 (RGYDGKDGEPGR) show a composition bias toward basic and acidic residues. The segment covering 194–203 (PGPIGQPGIP) has biased composition (low complexity). Over residues 311–320 (SGPPGPPGPS) the composition is skewed to pro residues. Residues 422 to 440 (SGSRGAQGPPGAPGSSGQN) show a composition bias toward low complexity. The segment covering 441 to 450 (GVDGGTGENG) has biased composition (gly residues). Composition is skewed to low complexity over residues 460-475 (ESGAPGDPGASGSAGP) and 508-518 (EPGPQGDQGPK). The region spanning 513 to 571 (GDQGPKGQKGEVGPVGEKGDKGWTGTPGDPGPQGDRGEPGPPGRDGVDGPPGPRGAPGE) is the Collagen-like 2 domain. Residues 610 to 622 (PPGPPGPPGPPGQ) show a composition bias toward pro residues. A Fibrillar collagen NC1 domain is found at 661 to 884 (ENVLKDLDEK…KLEIGPACFH (224 aa)). Disulfide bonds link Cys731/Cys882 and Cys793/Cys833.

This sequence belongs to the fibrillar collagen family. In terms of tissue distribution, component of the acid-insoluble organic matrix of the aragonitic skeleton (at protein level).

Its subcellular location is the secreted. The sequence is that of Collagen alpha chain from Acropora millepora (Staghorn coral).